The primary structure comprises 582 residues: Leucine-rich repeat protein SHOC-2 (582 aa).

Basic and acidic residues-rich tracts occupy residues 1-29 and 36-57; these read MSSSLGKEKDSKEKDPKVPSAKEREKEAK and KESKEKEPKTKGKDAKDGKKDS. The segment at 1–88 is disordered; that stretch reads MSSSLGKEKD…PGTRKKSSNA (88 aa). The RVxF motif; important for interaction with PP1c signature appears at 63-66; the sequence is GVAF. LRR repeat units follow at residues 101 to 122, 124 to 145, 147 to 169, 170 to 191, 193 to 214, 216 to 237, 239 to 260, 262 to 283, 285 to 307, 308 to 329, 332 to 353, 356 to 377, 380 to 400, 403 to 424, 426 to 448, 449 to 470, 472 to 494, 495 to 516, 518 to 540, and 542 to 563; these read NSMRLDLSKRSIHILPSSIKEL, QLTELYLYSNKLQSLPAEVGCL, NLMTLALSENSLTSLPDSLDNLK, KLRMLDLRHNKLREIPSVVYRL, SLTTLYLRFNRITTVEKDIKNL, KLSMLSIRENKIKQLPAEIGEL, NLITLDVAHNQLEHLPKEIGNC, QITNLDLQHNELLDLPDTIGNL, SLSRLGLRYNRLSAIPRSLAKCS, ALEELNLENNNISTLPESLLSS, KLNSLTLARNCFQLYPVGGPSQ, TIYSLNMEHNRINKIPFGIFSR, VLSKLNMKDNQLTSLPLDFGT, SMVELNLATNQLTKIPEDVSGL, SLEVLILSNNLLKKLPHGLGNLR, KLRELDLEENKLESLPNEIAYL, DLQKLVLTNNQLTTLPRGIGHLT, NLTHLGLGENLLTHLPEEIGTL, NLEELYLNDNPNLHSLPFELALC, and KLSIMSIENCPLSHLPPQIVAG.

The protein belongs to the SHOC2 family. As to quaternary structure, component of the SHOC2-MRAS-PP1c (SMP) complex consisting of SHOC2, GTP-bound M-Ras/MRAS and the catalytic subunit of protein phosphatase 1 (either PPP1CA, PPP1CB or PPP1CC). SHOC2 and PP1c preferably bind M-Ras/MRAS, but they also bind K-Ras/KRAS, N-Ras/NRAS and H-Ras/HRAS; these interactions are GTP-dependent and both SHOC2 and PP1c are required to form a stable complex. Interacts with PP1c in the absence of Ras GTPases. Interacts with M-Ras/MRAS and RAF1. Interacts with ERBIN; disrupts the interaction with RAF1 and Ras, preventing the activation of the Ras signaling pathway. Interacts with LZTR1.

The protein localises to the cytoplasm. It is found in the nucleus. Its function is as follows. Core component of the SHOC2-MRAS-PP1c (SMP) holophosphatase complex that regulates activation of the MAPK pathway. Acts as a scaffolding protein in the SMP complex. The SMP complex specifically dephosphorylates the inhibitory phosphorylation at 'Ser-259' of RAF1 kinase, 'Ser-365' of BRAF kinase and 'Ser-214' of ARAF kinase, stimulating their kinase activities. The SMP complex enhances the dephosphorylation activity and substrate specificity of PP1c. The sequence is that of Leucine-rich repeat protein SHOC-2 (SHOC2) from Homo sapiens (Human).